We begin with the raw amino-acid sequence, 159 residues long: Protein-export protein SecB (159 aa).

Belongs to the SecB family. Homotetramer, a dimer of dimers. One homotetramer interacts with 1 SecA dimer.

Its subcellular location is the cytoplasm. In terms of biological role, one of the proteins required for the normal export of preproteins out of the cell cytoplasm. It is a molecular chaperone that binds to a subset of precursor proteins, maintaining them in a translocation-competent state. It also specifically binds to its receptor SecA. This chain is Protein-export protein SecB, found in Pseudomonas fluorescens (strain ATCC BAA-477 / NRRL B-23932 / Pf-5).